We begin with the raw amino-acid sequence, 82 residues long: Acyl carrier protein (82 aa).

A Carrier domain is found at 4–79 (EKIFQELKNI…DVVDIIESNL (76 aa)). Ser39 is modified (O-(pantetheine 4'-phosphoryl)serine).

This sequence belongs to the acyl carrier protein (ACP) family. Post-translationally, 4'-phosphopantetheine is transferred from CoA to a specific serine of apo-ACP by AcpS. This modification is essential for activity because fatty acids are bound in thioester linkage to the sulfhydryl of the prosthetic group.

The protein localises to the cytoplasm. It functions in the pathway lipid metabolism; fatty acid biosynthesis. In terms of biological role, carrier of the growing fatty acid chain in fatty acid biosynthesis. The sequence is that of Acyl carrier protein from Coprothermobacter proteolyticus (strain ATCC 35245 / DSM 5265 / OCM 4 / BT).